A 304-amino-acid polypeptide reads, in one-letter code: Acetylglutamate kinase (304 aa).

Residues 75 to 76, Arg-97, and Asn-202 each bind substrate; that span reads GG.

This sequence belongs to the acetylglutamate kinase family. ArgB subfamily.

Its subcellular location is the cytoplasm. It carries out the reaction N-acetyl-L-glutamate + ATP = N-acetyl-L-glutamyl 5-phosphate + ADP. It functions in the pathway amino-acid biosynthesis; L-arginine biosynthesis; N(2)-acetyl-L-ornithine from L-glutamate: step 2/4. Functionally, catalyzes the ATP-dependent phosphorylation of N-acetyl-L-glutamate. This Parvibaculum lavamentivorans (strain DS-1 / DSM 13023 / NCIMB 13966) protein is Acetylglutamate kinase.